Reading from the N-terminus, the 94-residue chain is Small ribosomal subunit protein uS19 (94 aa).

It belongs to the universal ribosomal protein uS19 family.

Functionally, protein S19 forms a complex with S13 that binds strongly to the 16S ribosomal RNA. The protein is Small ribosomal subunit protein uS19 of Wolbachia pipientis wMel.